The chain runs to 698 residues: MAEEEPLFPALQEEDDFFRINSDRCSEELQDVKQVLFQEEGDSGSDYGSFKRLGKVLPRTVRAGNMLFPDLFQTNNLLFYERFETYKDYMLGDCKPSEVKEFIAEYLEKALEPSGWKAIWHTDVFDVLVEVTDVEFSSLNAIVRLCEPFLCESRVSSITHESINDLLEVKDQRVPLQELRVVFDESGLYDQTALTIEHVRFFYQQIWRPWDEEEEDYFDYFVRCVEPRLRLHYDILEDRIPSGLVAEYRSLLLQSEAVYMQFTNLRNNLSNKDSDSEAELDNVSMVEGMKMDDEMENLKRKLKLIKNPLLRYLFCYQRNSGSYNMQAKGPRPTGGKVIHVVSTSMSITMLQCLTRERLQPECSNKDLEIQFHRDPLEAVNACYEGDLVIICPGLYTIYGLINIMDSIEIEGYGLPDDVIIEKKGKGDSFVDCNGAHVKISNVKFVQHEAVEGIITIHSGTTELDNCVLQCETTGVTVKKCAELLMKYSDLYGAKGAGMEIYPGSKCTLIGNGIHHCRDGILIKDFIDVVYEIPKIIMENNVIHNNEGYAVVLVKPSPNFEKNSHTEELEGEHLDNNMIEEQASSNVLQPNLNEAMGVEDNAIEKSDHLEEEKSDPTIAKEEVECEYAIDCEEAEGNQVIATELVANTRRKTQLHKKRLSTLGIVTADDNNLTSQEIFVSIVGNQFKRNGKGSFGTFLF.

PbH1 repeat units lie at residues 480–502 (CAEL…EIYP), 503–524 (GSKC…LIKD), and 532–554 (IPKI…VLVK).

The protein resides in the midbody. The protein localises to the cytoplasm. It localises to the cytoskeleton. It is found in the spindle. In terms of biological role, may play a role in signaling pathways governing cellular proliferation. The sequence is that of SHC SH2 domain-binding protein 1 homolog B (shcbp1-b) from Xenopus laevis (African clawed frog).